The following is a 130-amino-acid chain: Small ribosomal subunit protein uS9 (130 aa).

This sequence belongs to the universal ribosomal protein uS9 family.

This is Small ribosomal subunit protein uS9 from Photorhabdus laumondii subsp. laumondii (strain DSM 15139 / CIP 105565 / TT01) (Photorhabdus luminescens subsp. laumondii).